Consider the following 1187-residue polypeptide: DNA-directed RNA polymerase subunit beta (1187 aa).

Belongs to the RNA polymerase beta chain family. In terms of assembly, the RNAP catalytic core consists of 2 alpha, 1 beta, 1 beta' and 1 omega subunit. When a sigma factor is associated with the core the holoenzyme is formed, which can initiate transcription.

It catalyses the reaction RNA(n) + a ribonucleoside 5'-triphosphate = RNA(n+1) + diphosphate. Functionally, DNA-dependent RNA polymerase catalyzes the transcription of DNA into RNA using the four ribonucleoside triphosphates as substrates. The sequence is that of DNA-directed RNA polymerase subunit beta from Streptococcus mutans serotype c (strain ATCC 700610 / UA159).